The following is a 352-amino-acid chain: DNA polymerase IV (352 aa).

A UmuC domain is found at 6–186; sequence IIHIDMDAFY…LPLGKIPGVG (181 aa). Residues Asp10 and Asp104 each coordinate Mg(2+). Glu105 is an active-site residue.

Belongs to the DNA polymerase type-Y family. Monomer. It depends on Mg(2+) as a cofactor.

The protein resides in the cytoplasm. The enzyme catalyses DNA(n) + a 2'-deoxyribonucleoside 5'-triphosphate = DNA(n+1) + diphosphate. Its function is as follows. Poorly processive, error-prone DNA polymerase involved in untargeted mutagenesis. Copies undamaged DNA at stalled replication forks, which arise in vivo from mismatched or misaligned primer ends. These misaligned primers can be extended by PolIV. Exhibits no 3'-5' exonuclease (proofreading) activity. May be involved in translesional synthesis, in conjunction with the beta clamp from PolIII. The sequence is that of DNA polymerase IV from Neisseria meningitidis serogroup C / serotype 2a (strain ATCC 700532 / DSM 15464 / FAM18).